Consider the following 407-residue polypeptide: Dephospho-CoA kinase (407 aa).

Positions 3-201 constitute a DPCK domain; the sequence is RIGLTGGIGA…ERIVPFAHNL (199 aa). 11–16 is a binding site for ATP; it reads GAGKSA. A UPF0157 region spans residues 196–407; that stretch reads PFAHNLSTRQ…DWADSTGWKP (212 aa).

In the N-terminal section; belongs to the CoaE family. It in the C-terminal section; belongs to the UPF0157 (GrpB) family.

The protein localises to the cytoplasm. It catalyses the reaction 3'-dephospho-CoA + ATP = ADP + CoA + H(+). The protein operates within cofactor biosynthesis; coenzyme A biosynthesis; CoA from (R)-pantothenate: step 5/5. Its function is as follows. Catalyzes the phosphorylation of the 3'-hydroxyl group of dephosphocoenzyme A to form coenzyme A. This Mycolicibacterium paratuberculosis (strain ATCC BAA-968 / K-10) (Mycobacterium paratuberculosis) protein is Dephospho-CoA kinase.